A 132-amino-acid polypeptide reads, in one-letter code: Small ribosomal subunit protein uS11 (132 aa).

The protein belongs to the universal ribosomal protein uS11 family. Part of the 30S ribosomal subunit. Interacts with proteins S7 and S18. Binds to IF-3.

Its function is as follows. Located on the platform of the 30S subunit, it bridges several disparate RNA helices of the 16S rRNA. Forms part of the Shine-Dalgarno cleft in the 70S ribosome. The chain is Small ribosomal subunit protein uS11 from Cupriavidus pinatubonensis (strain JMP 134 / LMG 1197) (Cupriavidus necator (strain JMP 134)).